A 971-amino-acid chain; its full sequence is Oncostatin-M-specific receptor subunit beta (971 aa).

An N-terminal signal peptide occupies residues 1–23 (MAFSVVLHPAFLLAVLSLRASRS). Residues 24–737 (EVLEEPLPLT…VTTPDARSHM (714 aa)) lie on the Extracellular side of the membrane. 5 N-linked (GlcNAc...) asparagine glycosylation sites follow: N74, N97, N130, N162, and N239. The cysteines at positions 242 and 252 are disulfide-linked. N-linked (GlcNAc...) asparagine glycosylation is found at N271, N304, N323, and N377. 4 consecutive Fibronectin type-III domains span residues 332–425 (APQD…TPET), 427–523 (PSQA…SNDS), 524–620 (GHEE…TQEL), and 622–733 (PLVN…TPDA). The WSXWS motif motif lies at 412–416 (WSDWT). N-linked (GlcNAc...) asparagine glycosylation is found at N491, N541, N577, N689, and N722. The chain crosses the membrane as a helical span at residues 738–758 (LLQIILPMTLCVLLSIIVCYW). The Cytoplasmic segment spans residues 759 to 971 (KSQWVKEKCY…STVLLGQGEQ (213 aa)). A Box 1 motif motif is present at residues 767–775 (CYPDIPNPY). Residues 949 to 971 (LASPSLKEDNSLTSTVLLGQGEQ) are disordered. The segment covering 959 to 971 (SLTSTVLLGQGEQ) has biased composition (polar residues).

This sequence belongs to the type I cytokine receptor family. Type 2 subfamily. As to quaternary structure, heterodimer composed of OSMR and IL6ST (type II OSM receptor). Heterodimer with IL31RA to form the IL31 receptor. As to expression, widely expressed. Expressed at highest levels in the lung, heart, thymus and spleen. Expressed in dorsal root ganglia.

Its subcellular location is the membrane. Functionally, associates with IL31RA to form the IL31 receptor. Binds IL31 to activate STAT3 and possibly STAT1 and STAT5. Capable of transducing OSM-specific signaling events. This Mus musculus (Mouse) protein is Oncostatin-M-specific receptor subunit beta (Osmr).